We begin with the raw amino-acid sequence, 186 residues long: Peptidyl-tRNA hydrolase (186 aa).

Position 13 (Y13) interacts with tRNA. The active-site Proton acceptor is H18. The tRNA site is built by Y59, N61, and N107.

Belongs to the PTH family. As to quaternary structure, monomer.

Its subcellular location is the cytoplasm. It catalyses the reaction an N-acyl-L-alpha-aminoacyl-tRNA + H2O = an N-acyl-L-amino acid + a tRNA + H(+). In terms of biological role, hydrolyzes ribosome-free peptidyl-tRNAs (with 1 or more amino acids incorporated), which drop off the ribosome during protein synthesis, or as a result of ribosome stalling. Catalyzes the release of premature peptidyl moieties from peptidyl-tRNA molecules trapped in stalled 50S ribosomal subunits, and thus maintains levels of free tRNAs and 50S ribosomes. The protein is Peptidyl-tRNA hydrolase of Thermotoga sp. (strain RQ2).